A 475-amino-acid chain; its full sequence is MSPLTETKAGTGFKAGVKDYRLTYYTPEYETKDTDILAAFRMTPQPGVPPEEAGAAVAAESSTGTWTTVWTDGLTSLDRYKGRCYDIEPVAGEDNQYIAYVAYPLDLFEEVSVTNLFTSIVGNVFGFKALRALRLEDLRIPPAYSKTFQGPPHGIQVERDKLNKYGRPLLGCTIKPKLGLSAKNYGRAVYECLRGGLDFTKDDENVNSQPFMRWRDRFLFVAEAIFKSQAETGEIKGHYLNATAGTSEEMMKRAQFARELGVPIIMHDYLTGGFTSNTSLSHYCRDNGLLLHIHRAMHAVIDRQKNHGIHFRVLAKALRMSGGDHIHSGTVVGKLEGEREVTLGFVDLLRDDYIEKDRSRGIYFTQDWVSMPGVLPVASGGIHVWHMPALTEIFGDDSVLQFGGGTLGHPWGNAPGAVANRVALEACVQARNEGRDLARQGNDIIREACKWSPELAAACEVWKEIKFEFETIDTL.

A propeptide spanning residues 1–2 is cleaved from the precursor; sequence MS. An N-acetylproline modification is found at P3. N6,N6,N6-trimethyllysine is present on K14. Residues N123 and T173 each coordinate substrate. K175 serves as the catalytic Proton acceptor. A substrate-binding site is contributed by K177. Residues K201, D203, and E204 each contribute to the Mg(2+) site. At K201 the chain carries N6-carboxylysine. Catalysis depends on H294, which acts as the Proton acceptor. 3 residues coordinate substrate: R295, H327, and S379.

This sequence belongs to the RuBisCO large chain family. Type I subfamily. In terms of assembly, heterohexadecamer of 8 large chains and 8 small chains. Mg(2+) serves as cofactor.

The protein resides in the plastid. The protein localises to the chloroplast. It catalyses the reaction 2 (2R)-3-phosphoglycerate + 2 H(+) = D-ribulose 1,5-bisphosphate + CO2 + H2O. The enzyme catalyses D-ribulose 1,5-bisphosphate + O2 = 2-phosphoglycolate + (2R)-3-phosphoglycerate + 2 H(+). Its function is as follows. RuBisCO catalyzes two reactions: the carboxylation of D-ribulose 1,5-bisphosphate, the primary event in carbon dioxide fixation, as well as the oxidative fragmentation of the pentose substrate in the photorespiration process. Both reactions occur simultaneously and in competition at the same active site. The polypeptide is Ribulose bisphosphate carboxylase large chain (Coleochaete orbicularis (Charophycean green alga)).